The following is a 63-amino-acid chain: Large ribosomal subunit protein bL28A (63 aa).

It belongs to the bacterial ribosomal protein bL28 family.

This chain is Large ribosomal subunit protein bL28A, found in Nocardia farcinica (strain IFM 10152).